We begin with the raw amino-acid sequence, 3394 residues long: Protein PFC0760c (3394 aa).

Low complexity-rich tracts occupy residues 471–508, 515–528, and 786–841; these read NNND…NYNN, NMNS…NNLH, and NNQN…NQNN. Disordered regions lie at residues 471 to 539, 779 to 844, 1038 to 1099, 1892 to 1918, 2648 to 2693, 2835 to 2909, 3000 to 3057, and 3107 to 3394; these read NNND…DENN, MSSN…NAGI, NKKK…NNDD, TTTT…NNND, KMDL…DNHL, AKNE…NSNN, VSVG…DVNT, and DYVN…NSEE. Positions 1038 to 1097 are enriched in basic and acidic residues; the sequence is NKKKNNDGDNKSQEDDDGNKKKNNDGDNKSQEDDDGNKKKNNDGDNKSQEDDYGNKKKNN. Residues 2657-2671 are compositionally biased toward acidic residues; it reads GDDDDDDDDDDDDDN. The span at 2672–2686 shows a compositional bias: low complexity; it reads NNNNNNNNNNNNNNM. The segment covering 2836–2846 has biased composition (polar residues); the sequence is KNENYPVSTHY. Composition is skewed to low complexity over residues 2855–2865 and 2872–2909; these read DNINNDNNNDN and NDNI…NSNN. 2 stretches are compositionally biased toward acidic residues: residues 3007–3047 and 3147–3257; these read DNND…EEKE and DDDE…DDND. Over residues 3258 to 3292 the composition is skewed to basic and acidic residues; the sequence is NDHNDDNNDEEKYSCHDDKNEHTNNDLLNIDHDNN. Positions 3300–3309 are enriched in polar residues; the sequence is LYSTYNVSVS. Positions 3310–3320 are enriched in basic and acidic residues; the sequence is HNKDPSNKENE. The span at 3321 to 3330 shows a compositional bias: polar residues; sequence IQNLISIDSS. The segment covering 3331–3379 has biased composition (acidic residues); the sequence is NENDENDENDENDENDENDENDENDENDENDENDEKDENDENDENDENF. The segment covering 3385-3394 has biased composition (polar residues); sequence GTLNEMNSEE.

The chain is Protein PFC0760c from Plasmodium falciparum (isolate 3D7).